The primary structure comprises 275 residues: NAD kinase (275 aa).

Aspartate 66 serves as the catalytic Proton acceptor. Residues aspartate 66 to glycine 67, asparagine 138 to glutamate 139, histidine 168, aspartate 170, threonine 181 to serine 186, and valine 205 contribute to the NAD(+) site.

It belongs to the NAD kinase family. The cofactor is a divalent metal cation.

It is found in the cytoplasm. The catalysed reaction is NAD(+) + ATP = ADP + NADP(+) + H(+). Its function is as follows. Involved in the regulation of the intracellular balance of NAD and NADP, and is a key enzyme in the biosynthesis of NADP. Catalyzes specifically the phosphorylation on 2'-hydroxyl of the adenosine moiety of NAD to yield NADP. This chain is NAD kinase, found in Halorubrum lacusprofundi (strain ATCC 49239 / DSM 5036 / JCM 8891 / ACAM 34).